The chain runs to 800 residues: Phenylalanine--tRNA ligase beta subunit (800 aa).

Residues 39–154 (TKDIKNLVVG…ESQVPGTDAL (116 aa)) form the tRNA-binding domain. In terms of domain architecture, B5 spans 408 to 483 (AFITPIDITA…RIYGYDDIPS (76 aa)). Mg(2+)-binding residues include aspartate 461, aspartate 467, glutamate 470, and glutamate 471. The FDX-ACB domain maps to 708–800 (PRFPGMSRDI…ALIEQGAVIR (93 aa)).

It belongs to the phenylalanyl-tRNA synthetase beta subunit family. Type 1 subfamily. In terms of assembly, tetramer of two alpha and two beta subunits. Mg(2+) is required as a cofactor.

It localises to the cytoplasm. It carries out the reaction tRNA(Phe) + L-phenylalanine + ATP = L-phenylalanyl-tRNA(Phe) + AMP + diphosphate + H(+). In Staphylococcus aureus (strain MRSA252), this protein is Phenylalanine--tRNA ligase beta subunit.